Here is a 446-residue protein sequence, read N- to C-terminus: UDP-N-acetylglucosamine--dolichyl-phosphate N-acetylglucosaminephosphotransferase (446 aa).

Transmembrane regions (helical) follow at residues 1–21 (MIESCFNVGIWATGLALLMNQ) and 25–45 (PLLSNVGLSVLAYKATAMFIP). UDP-N-acetyl-alpha-D-glucosamine is bound by residues 59–61 (KDM) and glutamate 71. The next 2 membrane-spanning stretches (helical) occupy residues 73-93 (MGAVSALVYFMCMIIFIPVLF) and 123-143 (LLGAYLSALLSILSVSLLGIL). Lysine 154 contacts dolichyl phosphate. 2 helical membrane passes run 155–175 (FFLPAIAAIPLLVVYYVDYGV) and 191–211 (SLINLGFLYYFYMAAVAIFCP). 208 to 216 (IFCPNSINI) contributes to the dolichyl phosphate binding site. Asparagine 215 contributes to the Mg(2+) binding site. The next 4 helical transmembrane spans lie at 216 to 236 (IIAGVNGVEAGQSLVLALVIA), 254 to 274 (AHLLSLYLVLPLIGVTAGLLK), 282 to 302 (VFVGDTFCYFAGMVMAVVGIL), and 311 to 331 (LFFIPQIFNFALSVPQLFGLV). Asparagine 221 is a binding site for UDP-N-acetyl-alpha-D-glucosamine. Aspartate 286 contributes to the Mg(2+) binding site. 335–337 (RHR) provides a ligand contact to UDP-N-acetyl-alpha-D-glucosamine. Asparagine 395 carries an N-linked (GlcNAc...) asparagine glycan. The helical transmembrane segment at 412–432 (DHLTICIMGLQLLTGIFGLII) threads the bilayer.

Belongs to the glycosyltransferase 4 family. Mg(2+) is required as a cofactor.

It localises to the endoplasmic reticulum membrane. It carries out the reaction a di-trans,poly-cis-dolichyl phosphate + UDP-N-acetyl-alpha-D-glucosamine = an N-acetyl-alpha-D-glucosaminyl-diphospho-di-trans,poly-cis-dolichol + UMP. It functions in the pathway protein modification; protein glycosylation. Its activity is regulated as follows. Inhibited by natural nucleoside antibiotic tunicamycin, which acts as a structural analog and competitor of UDP-GlcNAc. In terms of biological role, UDP-N-acetylglucosamine--dolichyl-phosphate N-acetylglucosaminephosphotransferase that operates in the biosynthetic pathway of dolichol-linked oligosaccharides, the glycan precursors employed in protein asparagine (N)-glycosylation. The assembly of dolichol-linked oligosaccharides begins on the cytosolic side of the endoplasmic reticulum membrane and finishes in its lumen. The sequential addition of sugars to dolichol pyrophosphate produces dolichol-linked oligosaccharides containing fourteen sugars, including two GlcNAcs, nine mannoses and three glucoses. Once assembled, the oligosaccharide is transferred from the lipid to nascent proteins by oligosaccharyltransferases. Catalyzes the initial step of dolichol-linked oligosaccharide biosynthesis, transfering GlcNAc-1-P from cytosolic UDP-GlcNAc onto the carrier lipid dolichyl phosphate (P-dolichol), yielding GlcNAc-P-P-dolichol embedded in the cytoplasmic leaflet of the endoplasmic reticulum membrane. The protein is UDP-N-acetylglucosamine--dolichyl-phosphate N-acetylglucosaminephosphotransferase (gpt2) of Schizosaccharomyces pombe (strain 972 / ATCC 24843) (Fission yeast).